A 287-amino-acid polypeptide reads, in one-letter code: MFRFQRIGQQLVRRETFLHSPRAKLVQPYLFNSQRQYVIVHKDLQKAKKEPRIRYILYMIALSWAAIFFVSSKVDKKKPMQSMTEREFQEYEKQTGIKRRHKLIHSDQNSKYKFYVIPYIYNNEQIEKIEQSLAKSDPNRKNVVIDPAKLVLEEKEDEGAKYSALLNDLDAMKKPYPPGLITAIIKQHINLLINTREGTFDTNYIIKNYPQTTGEAIKFENDIGDISKCLIMHYDMLNELPQQLPEEKVRNIRNVEGYFDSVNKAQTMVSKFDIMDEKFEEIILEDL.

The N-terminal 14 residues, 1 to 14 (MFRFQRIGQQLVRR), are a transit peptide targeting the mitochondrion. A helical transmembrane segment spans residues 55–72 (YILYMIALSWAAIFFVSS).

The protein belongs to the AIM36 family.

It localises to the mitochondrion membrane. The protein is Altered inheritance of mitochondria protein 36, mitochondrial (AIM36) of Lodderomyces elongisporus (strain ATCC 11503 / CBS 2605 / JCM 1781 / NBRC 1676 / NRRL YB-4239) (Yeast).